A 267-amino-acid polypeptide reads, in one-letter code: 14-3-3-like protein GF14 phi (267 aa).

Ala2 carries the post-translational modification N-acetylalanine. Ser73 and Ser196 each carry phosphoserine. Thr217 carries the phosphothreonine modification. The tract at residues Met244–Ile267 is disordered. Ser248 carries the post-translational modification Phosphoserine. A compositionally biased stretch (basic and acidic residues) spans Glu250 to Ile267.

This sequence belongs to the 14-3-3 family. In terms of assembly, interacts with FD. Interacts with CINV1.

Its subcellular location is the nucleus. The protein localises to the cytoplasm. Is associated with a DNA binding complex that binds to the G box, a well-characterized cis-acting DNA regulatory element found in plant genes. The chain is 14-3-3-like protein GF14 phi (GRF4) from Arabidopsis thaliana (Mouse-ear cress).